A 191-amino-acid chain; its full sequence is Leucyl/phenylalanyl-tRNA--protein transferase (191 aa).

Belongs to the L/F-transferase family.

Its subcellular location is the cytoplasm. The enzyme catalyses N-terminal L-lysyl-[protein] + L-leucyl-tRNA(Leu) = N-terminal L-leucyl-L-lysyl-[protein] + tRNA(Leu) + H(+). The catalysed reaction is N-terminal L-arginyl-[protein] + L-leucyl-tRNA(Leu) = N-terminal L-leucyl-L-arginyl-[protein] + tRNA(Leu) + H(+). It catalyses the reaction L-phenylalanyl-tRNA(Phe) + an N-terminal L-alpha-aminoacyl-[protein] = an N-terminal L-phenylalanyl-L-alpha-aminoacyl-[protein] + tRNA(Phe). Its function is as follows. Functions in the N-end rule pathway of protein degradation where it conjugates Leu, Phe and, less efficiently, Met from aminoacyl-tRNAs to the N-termini of proteins containing an N-terminal arginine or lysine. The polypeptide is Leucyl/phenylalanyl-tRNA--protein transferase (Trichormus variabilis (strain ATCC 29413 / PCC 7937) (Anabaena variabilis)).